The chain runs to 215 residues: N-(5'-phosphoribosyl)anthranilate isomerase (215 aa).

Belongs to the TrpF family.

The catalysed reaction is N-(5-phospho-beta-D-ribosyl)anthranilate = 1-(2-carboxyphenylamino)-1-deoxy-D-ribulose 5-phosphate. Its pathway is amino-acid biosynthesis; L-tryptophan biosynthesis; L-tryptophan from chorismate: step 3/5. The polypeptide is N-(5'-phosphoribosyl)anthranilate isomerase (Rhizobium meliloti (strain 1021) (Ensifer meliloti)).